The chain runs to 179 residues: Acireductone dioxygenase (179 aa).

The disordered stretch occupies residues 7–26 (MDDAPGDPRQPHRPDPGRPV). Fe(2+) is bound by residues His-88, His-90, Glu-94, and His-133. Ni(2+)-binding residues include His-88, His-90, Glu-94, and His-133.

This sequence belongs to the acireductone dioxygenase (ARD) family. As to quaternary structure, monomer. Interacts with MMP14. It depends on Fe(2+) as a cofactor. Requires Ni(2+) as cofactor. Detected in heart, colon, lung, stomach, brain, spleen, liver, skeletal muscle and kidney.

Its subcellular location is the cytoplasm. The protein resides in the nucleus. It localises to the cell membrane. It catalyses the reaction 1,2-dihydroxy-5-(methylsulfanyl)pent-1-en-3-one + O2 = 4-methylsulfanyl-2-oxobutanoate + formate + 2 H(+). It carries out the reaction 1,2-dihydroxy-5-(methylsulfanyl)pent-1-en-3-one + O2 = 3-(methylsulfanyl)propanoate + CO + formate + 2 H(+). It functions in the pathway amino-acid biosynthesis; L-methionine biosynthesis via salvage pathway; L-methionine from S-methyl-5-thio-alpha-D-ribose 1-phosphate: step 5/6. In terms of biological role, catalyzes 2 different reactions between oxygen and the acireductone 1,2-dihydroxy-3-keto-5-methylthiopentene (DHK-MTPene) depending upon the metal bound in the active site. Fe-containing acireductone dioxygenase (Fe-ARD) produces formate and 2-keto-4-methylthiobutyrate (KMTB), the alpha-ketoacid precursor of methionine in the methionine recycle pathway. Ni-containing acireductone dioxygenase (Ni-ARD) produces methylthiopropionate, carbon monoxide and formate, and does not lie on the methionine recycle pathway. Also down-regulates cell migration mediated by MMP14. Necessary for hepatitis C virus replication in an otherwise non-permissive cell line. This is Acireductone dioxygenase from Homo sapiens (Human).